Consider the following 105-residue polypeptide: uncharacterized protein (105 aa).

This is an uncharacterized protein from Saccharomyces cerevisiae (strain ATCC 204508 / S288c) (Baker's yeast).